The following is a 203-amino-acid chain: Small ribosomal subunit protein uS7A (203 aa).

It belongs to the universal ribosomal protein uS7 family. As to quaternary structure, component of the small ribosomal subunit (SSU). Mature yeast ribosomes consist of a small (40S) and a large (60S) subunit. The 40S small subunit contains 1 molecule of ribosomal RNA (18S rRNA) and at least 33 different proteins. The large 60S subunit contains 3 rRNA molecules (25S, 5.8S and 5S rRNA) and at least 46 different proteins.

Its subcellular location is the cytoplasm. The protein resides in the nucleus. It localises to the nucleolus. Its function is as follows. Component of the ribosome, a large ribonucleoprotein complex responsible for the synthesis of proteins in the cell. The small ribosomal subunit (SSU) binds messenger RNAs (mRNAs) and translates the encoded message by selecting cognate aminoacyl-transfer RNA (tRNA) molecules. The large subunit (LSU) contains the ribosomal catalytic site termed the peptidyl transferase center (PTC), which catalyzes the formation of peptide bonds, thereby polymerizing the amino acids delivered by tRNAs into a polypeptide chain. The nascent polypeptides leave the ribosome through a tunnel in the LSU and interact with protein factors that function in enzymatic processing, targeting, and the membrane insertion of nascent chains at the exit of the ribosomal tunnel. In Schizosaccharomyces pombe (strain 972 / ATCC 24843) (Fission yeast), this protein is Small ribosomal subunit protein uS7A (rps5).